Consider the following 246-residue polypeptide: Probable transcriptional regulatory protein PM0980 (246 aa).

This sequence belongs to the TACO1 family.

It is found in the cytoplasm. This chain is Probable transcriptional regulatory protein PM0980, found in Pasteurella multocida (strain Pm70).